The chain runs to 136 residues: Small ribosomal subunit protein uS9 (136 aa).

A disordered region spans residues 115–136; the sequence is KVKERKKPGLRKARKARQFSKR. The segment covering 117 to 136 has biased composition (basic residues); the sequence is KERKKPGLRKARKARQFSKR.

Belongs to the universal ribosomal protein uS9 family.

This Mycoplasmopsis pulmonis (strain UAB CTIP) (Mycoplasma pulmonis) protein is Small ribosomal subunit protein uS9.